Consider the following 581-residue polypeptide: A-type ATP synthase subunit A (581 aa).

Residue 232 to 239 (GPFGSGKT) participates in ATP binding.

The protein belongs to the ATPase alpha/beta chains family. As to quaternary structure, has multiple subunits with at least A(3), B(3), C, D, E, F, H, I and proteolipid K(x).

The protein resides in the cell membrane. It carries out the reaction ATP + H2O + 4 H(+)(in) = ADP + phosphate + 5 H(+)(out). Functionally, component of the A-type ATP synthase that produces ATP from ADP in the presence of a proton gradient across the membrane. The A chain is the catalytic subunit. The polypeptide is A-type ATP synthase subunit A (Methanocorpusculum labreanum (strain ATCC 43576 / DSM 4855 / Z)).